The chain runs to 205 residues: Small ribosomal subunit protein uS4 (205 aa).

One can recognise an S4 RNA-binding domain in the interval S95 to I158.

This sequence belongs to the universal ribosomal protein uS4 family. In terms of assembly, part of the 30S ribosomal subunit. Contacts protein S5. The interaction surface between S4 and S5 is involved in control of translational fidelity.

In terms of biological role, one of the primary rRNA binding proteins, it binds directly to 16S rRNA where it nucleates assembly of the body of the 30S subunit. Functionally, with S5 and S12 plays an important role in translational accuracy. The protein is Small ribosomal subunit protein uS4 of Mycoplasma genitalium (strain ATCC 33530 / DSM 19775 / NCTC 10195 / G37) (Mycoplasmoides genitalium).